A 270-amino-acid polypeptide reads, in one-letter code: Putative hydro-lyase Reut_A2449 (270 aa).

Belongs to the D-glutamate cyclase family.

The polypeptide is Putative hydro-lyase Reut_A2449 (Cupriavidus pinatubonensis (strain JMP 134 / LMG 1197) (Cupriavidus necator (strain JMP 134))).